We begin with the raw amino-acid sequence, 1334 residues long: Aldehyde oxidase 1 (1334 aa).

One can recognise a 2Fe-2S ferredoxin-type domain in the interval 5-92 (PELLFYVNGR…GAAVTTVEGI (88 aa)). [2Fe-2S] cluster is bound by residues Cys-44, Cys-49, Cys-52, and Cys-74. Gln-113 is a Mo-molybdopterin binding site. [2Fe-2S] cluster-binding residues include Cys-114, Cys-117, Cys-149, and Cys-151. Cys-151 contributes to the Mo-molybdopterin binding site. The 186-residue stretch at 236 to 421 (FSGERMMWIS…ASVHIPYSRK (186 aa)) folds into the FAD-binding PCMH-type domain. FAD contacts are provided by residues 264-271 (VVMGNTSV), Ala-345, Ser-354, His-358, Asp-367, and Leu-411. Mo-molybdopterin contacts are provided by residues 802–803 (AF) and Met-1043. Residue Ser-1064 is modified to Phosphoserine. Mo-molybdopterin is bound by residues 1084–1087 (GSVV), Gln-1199, and Leu-1264. The Proton acceptor; for azaheterocycle hydroxylase activity role is filled by Glu-1266.

Belongs to the xanthine dehydrogenase family. As to quaternary structure, homodimer. [2Fe-2S] cluster serves as cofactor. The cofactor is FAD. It depends on Mo-molybdopterin as a cofactor. In terms of processing, the N-terminus is blocked. In terms of tissue distribution, very high expression in liver and lung. High expression in kidney, pancreas, brain stem and spinal cord. Moderate expression in heart, testis, eye, cerebral cortex and cerebellum. Low expression in stomach and muscle.

It is found in the cytoplasm. The catalysed reaction is an aldehyde + O2 + H2O = a carboxylate + H2O2 + H(+). The enzyme catalyses retinal + O2 + H2O = retinoate + H2O2 + H(+). It carries out the reaction all-trans-retinal + O2 + H2O = all-trans-retinoate + H2O2 + H(+). Its activity is regulated as follows. Inhibited by hydralazine and menadione. Not inhibited by BOF-4272 or allopurinol, xanthine dehydrogenase potent inhibitors. In contrast to guinea pig, human and rat, isovanillin is not an inhibitor but a substrate for AOX1 in rabbit. In terms of biological role, oxidase with broad substrate specificity, oxidizing aromatic azaheterocycles, such as N1-methylnicotinamide, N-methylphthalazinium and phthalazine, as well as aldehydes, such as benzaldehyde, retinal, pyridoxal, and vanillin. Plays a key role in the metabolism of xenobiotics and drugs containing aromatic azaheterocyclic substituents. Participates in the bioactivation of prodrugs such as famciclovir, catalyzing the oxidation step from 6-deoxypenciclovir to penciclovir, which is a potent antiviral agent. Is probably involved in the regulation of reactive oxygen species homeostasis. May be a prominent source of superoxide generation via the one-electron reduction of molecular oxygen. May also catalyze nitric oxide (NO) production via the reduction of nitrite to NO with NADH or aldehyde as electron donor. May play a role in adipogenesis. Cannot use hypoxanthine and all-trans-retinol as substrate. The polypeptide is Aldehyde oxidase 1 (Oryctolagus cuniculus (Rabbit)).